Consider the following 235-residue polypeptide: Phosphatidylserine decarboxylase proenzyme (235 aa).

The Schiff-base intermediate with substrate; via pyruvic acid role is filled by S204. S204 bears the Pyruvic acid (Ser); by autocatalysis mark.

It belongs to the phosphatidylserine decarboxylase family. PSD-A subfamily. As to quaternary structure, heterodimer of a large membrane-associated beta subunit and a small pyruvoyl-containing alpha subunit. Requires pyruvate as cofactor. In terms of processing, is synthesized initially as an inactive proenzyme. Formation of the active enzyme involves a self-maturation process in which the active site pyruvoyl group is generated from an internal serine residue via an autocatalytic post-translational modification. Two non-identical subunits are generated from the proenzyme in this reaction, and the pyruvate is formed at the N-terminus of the alpha chain, which is derived from the carboxyl end of the proenzyme. The post-translation cleavage follows an unusual pathway, termed non-hydrolytic serinolysis, in which the side chain hydroxyl group of the serine supplies its oxygen atom to form the C-terminus of the beta chain, while the remainder of the serine residue undergoes an oxidative deamination to produce ammonia and the pyruvoyl prosthetic group on the alpha chain.

The protein localises to the cell membrane. It catalyses the reaction a 1,2-diacyl-sn-glycero-3-phospho-L-serine + H(+) = a 1,2-diacyl-sn-glycero-3-phosphoethanolamine + CO2. It participates in phospholipid metabolism; phosphatidylethanolamine biosynthesis; phosphatidylethanolamine from CDP-diacylglycerol: step 2/2. Functionally, catalyzes the formation of phosphatidylethanolamine (PtdEtn) from phosphatidylserine (PtdSer). The sequence is that of Phosphatidylserine decarboxylase proenzyme from Mycobacterium sp. (strain JLS).